Consider the following 403-residue polypeptide: Propionate kinase (403 aa).

This sequence belongs to the acetokinase family. PduW subfamily.

It is found in the cytoplasm. It catalyses the reaction propanoate + ATP = propanoyl phosphate + ADP. Its pathway is polyol metabolism; 1,2-propanediol degradation. Works with phosphate acetyltransferase (pta) to capture exogenous propionate and regenerate propionyl-CoA during degradation of 1,2-propanediol (1,2-PD). The polypeptide is Propionate kinase (Citrobacter rodentium (strain ICC168) (Citrobacter freundii biotype 4280)).